Consider the following 87-residue polypeptide: MARPAGHAASQAGGTAAADARQMRLVAAVIAVTMALWLGVQWLGGQQDWPAKYAFLADLAAIGALIWSLLVTFRIWRRRKASSQGQG.

2 helical membrane-spanning segments follow: residues 25–45 (LVAAVIAVTMALWLGVQWLGG) and 53–73 (YAFLADLAAIGALIWSLLVTF).

The protein resides in the cell membrane. This is an uncharacterized protein from Paracoccus denitrificans.